Reading from the N-terminus, the 133-residue chain is Small ribosomal subunit protein uS8c (133 aa).

This sequence belongs to the universal ribosomal protein uS8 family. As to quaternary structure, part of the 30S ribosomal subunit.

The protein resides in the plastid. Its subcellular location is the chloroplast. In terms of biological role, one of the primary rRNA binding proteins, it binds directly to 16S rRNA central domain where it helps coordinate assembly of the platform of the 30S subunit. The protein is Small ribosomal subunit protein uS8c (rps8) of Cyanidium caldarium (Red alga).